The following is a 354-amino-acid chain: Uroporphyrinogen decarboxylase (354 aa).

Residues 27 to 31 (RQAGR), D77, Y154, T209, and H327 each bind substrate.

It belongs to the uroporphyrinogen decarboxylase family. As to quaternary structure, homodimer.

The protein resides in the cytoplasm. It carries out the reaction uroporphyrinogen III + 4 H(+) = coproporphyrinogen III + 4 CO2. It functions in the pathway porphyrin-containing compound metabolism; protoporphyrin-IX biosynthesis; coproporphyrinogen-III from 5-aminolevulinate: step 4/4. In terms of biological role, catalyzes the decarboxylation of four acetate groups of uroporphyrinogen-III to yield coproporphyrinogen-III. This is Uroporphyrinogen decarboxylase from Salmonella schwarzengrund (strain CVM19633).